Consider the following 327-residue polypeptide: GMP reductase (327 aa).

The active-site Thioimidate intermediate is the Cys175. 204–227 (IIADGGIRTHGDIAKSIRFGASMV) serves as a coordination point for NADP(+).

The protein belongs to the IMPDH/GMPR family. GuaC type 2 subfamily.

It catalyses the reaction IMP + NH4(+) + NADP(+) = GMP + NADPH + 2 H(+). In terms of biological role, catalyzes the irreversible NADPH-dependent deamination of GMP to IMP. It functions in the conversion of nucleobase, nucleoside and nucleotide derivatives of G to A nucleotides, and in maintaining the intracellular balance of A and G nucleotides. This chain is GMP reductase, found in Oceanobacillus iheyensis (strain DSM 14371 / CIP 107618 / JCM 11309 / KCTC 3954 / HTE831).